Here is a 265-residue protein sequence, read N- to C-terminus: Dehydrogenase RED2 (265 aa).

The chain crosses the membrane as a helical span at residues 6–26 (SFLLSKLFLCIALCTAYVAFS). Residue N45 is glycosylated (N-linked (GlcNAc...) asparagine). The chain crosses the membrane as a helical span at residues 47–67 (TSTVFGLTIVAIGLSALSSWL). N74 carries an N-linked (GlcNAc...) asparagine glycan. Residue V89 participates in NADP(+) binding. N127 is a glycosylation site (N-linked (GlcNAc...) asparagine). 2 residues coordinate NADP(+): D136 and N163. Residue N176 is glycosylated (N-linked (GlcNAc...) asparagine). Residue S216 is the Proton donor of the active site. Residues Y228 and K232 each contribute to the NADP(+) site. Y228 functions as the Proton acceptor in the catalytic mechanism. The active-site Lowers pKa of active site Tyr is K232.

It belongs to the short-chain dehydrogenases/reductases (SDR) family.

The protein localises to the membrane. The catalysed reaction is a primary alcohol + NAD(+) = an aldehyde + NADH + H(+). It carries out the reaction a secondary alcohol + NAD(+) = a ketone + NADH + H(+). Its pathway is mycotoxin biosynthesis. Functionally, dehydrogenase; part of the Tox1B locus, one of the 2 loci that mediate the biosynthesis of T-toxin, a family of linear polyketides 37 to 45 carbons in length, of which the major component is 41 carbons, and which leads to high virulence to maize. One of the PKSs (PKS1 or PKS2) could synthesize a precursor, used subsequently by the other PKS as starter unit, to add additional carbons. Variability in the length of the final carbon backbone C35-47 could be achieved by varying the number of condensation cycles, or use of different starter or extender units or might be due to decarboxylation of the penultimate product, catalyzed by DEC1. Additional proteins are required for the biosynthesis of T-toxin, including oxidoreductases RED1, RED2, RED3, LAM1 and OXI1, as well as esterase TOX9. The chain is Dehydrogenase RED2 from Cochliobolus heterostrophus (strain C4 / ATCC 48331 / race T) (Southern corn leaf blight fungus).